A 193-amino-acid polypeptide reads, in one-letter code: MHKVAIFGGSFDPVHKSHIQIAKLAFKSLDLKKMIFVIAYTPPHKTKQYAYIEDRISMLKLATGNMQKTEISLYEAQKLETVYSYQTLDYFNSLYPEDEIYMVIGSDSLLDLPIWNNIDYMAGRYKFIVAKRHGFDEVNKNVKYLDRCVFIDKETEDISSTEIRRLVKEDYKKAVSMLNKKVYNYIIQNGLYK.

The protein belongs to the NadD family.

It carries out the reaction nicotinate beta-D-ribonucleotide + ATP + H(+) = deamido-NAD(+) + diphosphate. It participates in cofactor biosynthesis; NAD(+) biosynthesis; deamido-NAD(+) from nicotinate D-ribonucleotide: step 1/1. Catalyzes the reversible adenylation of nicotinate mononucleotide (NaMN) to nicotinic acid adenine dinucleotide (NaAD). The polypeptide is Probable nicotinate-nucleotide adenylyltransferase (Endomicrobium trichonymphae).